A 225-amino-acid chain; its full sequence is Ferric nitrobindin-like protein (225 aa).

Residues 78-84 (GVWRGTG) carry the GXWXGXG motif.

The protein belongs to the nitrobindin family.

The chain is Ferric nitrobindin-like protein from Corynebacterium diphtheriae (strain ATCC 700971 / NCTC 13129 / Biotype gravis).